The chain runs to 58 residues: Large ribosomal subunit protein bL32c (58 aa).

This sequence belongs to the bacterial ribosomal protein bL32 family.

Its subcellular location is the plastid. It localises to the chloroplast. In Chaetosphaeridium globosum (Charophycean green alga), this protein is Large ribosomal subunit protein bL32c.